A 316-amino-acid chain; its full sequence is Erythritol catabolism regulatory protein EryD (316 aa).

Residues 23–42 (QSAVAKRLGLPSVKAHRLIA) constitute a DNA-binding region (H-T-H motif).

The protein belongs to the SorC transcriptional regulatory family.

With respect to regulation, erythritol may act as an inducer, probably by binding to EryD and inhibiting its repressor activity. In terms of biological role, represses the expression of the eryABCD operon, which is involved in erythritol catabolism. The polypeptide is Erythritol catabolism regulatory protein EryD (Brucella abortus (strain 2308)).